Reading from the N-terminus, the 389-residue chain is Abscission/NoCut checkpoint regulator (389 aa).

An FYVE-type zinc finger spans residues 1–58 (MESRCYGCAVKFTLFKKEYGCKNCGRAFCNGCLSFSALVPRAGNTQQKVCKQCHTILT). Residues C5, C8, C21, C24, C29, C32, C50, and C53 each contribute to the Zn(2+) site. Position 69 is a phosphoserine (S69). Positions 99–112 (DQAIAERLARLRQE) match the MIM1-A motif. A Glycyl lysine isopeptide (Lys-Gly) (interchain with G-Cter in SUMO2) cross-link involves residue K132. Disordered stretches follow at residues 158–177 (PSHT…QAQQ) and 204–227 (QNDL…SQSL). Residues 167 to 177 (QAPDTRTQAQQ) show a composition bias toward low complexity. Residues 214-226 (SQRTNSQGQASQS) are compositionally biased toward polar residues. Position 219 is a phosphoserine (S219). Positions 226 to 261 (SLEEEKYKLLAEAAVELQEENTRQERILALAKRLAV) form a coiled coil. Positions 252–265 (ILALAKRLAVLKGQ) match the MIM1-B motif. S280 bears the Phosphoserine mark.

Interacts (via MIM1-B) with VPS4A; interaction takes place at the midbody ring following cytokinesis checkpoint activation.

It localises to the cytoplasm. The protein resides in the cytoskeleton. Its subcellular location is the microtubule organizing center. It is found in the centrosome. The protein localises to the cleavage furrow. It localises to the midbody. The protein resides in the midbody ring. Key regulator of abscission step in cytokinesis: part of the cytokinesis checkpoint, a process required to delay abscission to prevent both premature resolution of intercellular chromosome bridges and accumulation of DNA damage. Together with CHMP4C, required to retain abscission-competent VPS4 (VPS4A and/or VPS4B) at the midbody ring until abscission checkpoint signaling is terminated at late cytokinesis. Deactivation of AURKB results in dephosphorylation of CHMP4C followed by its dissociation from ZFYVE19/ANCHR and VPS4 and subsequent abscission. This is Abscission/NoCut checkpoint regulator (Zfyve19) from Mus musculus (Mouse).